A 60-amino-acid polypeptide reads, in one-letter code: Conotoxin Pu5.6 (60 aa).

The first 19 residues, 1–19 (MRCVPVFVILLLLIASAAS), serve as a signal peptide directing secretion. A propeptide spanning residues 20-47 (IDAQQKTKDDAPLTSLNDNALQQHWNKR) is cleaved from the precursor.

Belongs to the conotoxin T superfamily. Contains 2 disulfide bonds that can be either 'C1-C3, C2-C4' or 'C1-C4, C2-C3', since these disulfide connectivities have been observed for conotoxins with cysteine framework V (for examples, see AC P0DQQ7 and AC P81755). Expressed by the venom duct.

Its subcellular location is the secreted. The sequence is that of Conotoxin Pu5.6 from Conus pulicarius (Flea-bitten cone).